Consider the following 349-residue polypeptide: N-formyl peptide receptor 3 (349 aa).

The Extracellular segment spans residues 1–27 (METNFSIPLNETEEVLPEPAGHTVLWI). Residues N4 and N10 are each glycosylated (N-linked (GlcNAc...) asparagine). Residues 28-50 (FSLLVHGVTFIFGVLGNGLVIWV) form a helical membrane-spanning segment. Over 51 to 61 (AGFLMTRTVNT) the chain is Cytoplasmic. Residues 62–83 (ICYLNLALADFSFSAILPFHMV) traverse the membrane as a helical segment. Residues 84-100 (SVAMREKWPFGSFLCKL) are Extracellular-facing. C98 and C176 form a disulfide bridge. A helical transmembrane segment spans residues 101 to 121 (VHVMIDINLFVSVYLITIIAL). Topologically, residues 122 to 140 (DRCICVLHPAWAQNHRTMS) are cytoplasmic. Residues 141 to 162 (LAKRVMTGLWILTIVLTLPNFI) traverse the membrane as a helical segment. Topologically, residues 163–205 (FWTTISTTNGDTYCIFNFPFWGDTAVERLNVFITMAKVFLILH) are extracellular. A helical transmembrane segment spans residues 206–226 (FIIGFSMPMSIITVCYGIIAA). The Cytoplasmic portion of the chain corresponds to 227–242 (KIHRNHMIKSSRPLRV). A helical membrane pass occupies residues 243 to 266 (FAAVVASFFICWFPYELIGILMAV). The Extracellular portion of the chain corresponds to 267–286 (WLKEMLLNGKYKIILVLINP). Residues 287–306 (TSSLAFFNSCLNPILYVFLG) traverse the membrane as a helical segment. At 307–349 (SNFQERLIRSLPTSLERALTEVPDSAQTSNTHTTSASPPEETE) the chain is on the cytoplasmic side. Residues 327–349 (EVPDSAQTSNTHTTSASPPEETE) are disordered. A compositionally biased stretch (polar residues) spans 331–343 (SAQTSNTHTTSAS).

Belongs to the G-protein coupled receptor 1 family.

Its subcellular location is the cell membrane. Functionally, low affinity receptor for N-formyl-methionyl peptides, which are powerful neutrophils chemotactic factors. Binding of FMLP to the receptor causes activation of neutrophils. This response is mediated via a G-protein that activates a phosphatidylinositol-calcium second messenger system. This chain is N-formyl peptide receptor 3 (FPR3), found in Gorilla gorilla gorilla (Western lowland gorilla).